The following is a 321-amino-acid chain: 5,10-methylenetetrahydromethanopterin reductase (321 aa).

This sequence belongs to the mer family.

Its subcellular location is the cytoplasm. It carries out the reaction 5-methyl-5,6,7,8-tetrahydromethanopterin + oxidized coenzyme F420-(gamma-L-Glu)(n) + H(+) = 5,10-methylenetetrahydromethanopterin + reduced coenzyme F420-(gamma-L-Glu)(n). Its pathway is one-carbon metabolism; methanogenesis from CO(2); methyl-coenzyme M from 5,10-methylene-5,6,7,8-tetrahydromethanopterin: step 1/2. Catalyzes the reversible reduction of methylene-H(4)MPT to methyl-H(4)MPT. This chain is 5,10-methylenetetrahydromethanopterin reductase, found in Methanothermobacter thermautotrophicus (strain ATCC 29096 / DSM 1053 / JCM 10044 / NBRC 100330 / Delta H) (Methanobacterium thermoautotrophicum).